Reading from the N-terminus, the 545-residue chain is Glucose-6-phosphate isomerase (545 aa).

Glu345 (proton donor) is an active-site residue. Residues His376 and Lys514 contribute to the active site.

This sequence belongs to the GPI family.

Its subcellular location is the cytoplasm. The catalysed reaction is alpha-D-glucose 6-phosphate = beta-D-fructose 6-phosphate. It participates in carbohydrate biosynthesis; gluconeogenesis. Its pathway is carbohydrate degradation; glycolysis; D-glyceraldehyde 3-phosphate and glycerone phosphate from D-glucose: step 2/4. Functionally, catalyzes the reversible isomerization of glucose-6-phosphate to fructose-6-phosphate. The polypeptide is Glucose-6-phosphate isomerase (Leptothrix cholodnii (strain ATCC 51168 / LMG 8142 / SP-6) (Leptothrix discophora (strain SP-6))).